Consider the following 122-residue polypeptide: Small ribosomal subunit protein uS13 (122 aa).

Residues 99 to 122 form a disordered region; sequence RGQRTHTNARTRKGPAKAIAGKKK.

The protein belongs to the universal ribosomal protein uS13 family. Part of the 30S ribosomal subunit. Forms a loose heterodimer with protein S19. Forms two bridges to the 50S subunit in the 70S ribosome.

Functionally, located at the top of the head of the 30S subunit, it contacts several helices of the 16S rRNA. In the 70S ribosome it contacts the 23S rRNA (bridge B1a) and protein L5 of the 50S subunit (bridge B1b), connecting the 2 subunits; these bridges are implicated in subunit movement. Contacts the tRNAs in the A and P-sites. The sequence is that of Small ribosomal subunit protein uS13 from Bradyrhizobium sp. (strain ORS 278).